The chain runs to 386 residues: Probable dual-specificity RNA methyltransferase RlmN (386 aa).

Glu-123 serves as the catalytic Proton acceptor. The Radical SAM core domain occupies Tyr-129 to Asp-372. Residues Cys-136 and Cys-377 are joined by a disulfide bond. 3 residues coordinate [4Fe-4S] cluster: Cys-143, Cys-147, and Cys-150. S-adenosyl-L-methionine is bound by residues Gly-198–Glu-199, Ser-232, Ser-255–His-257, and Asn-334. Cys-377 acts as the S-methylcysteine intermediate in catalysis.

It belongs to the radical SAM superfamily. RlmN family. [4Fe-4S] cluster is required as a cofactor.

The protein resides in the cytoplasm. The enzyme catalyses adenosine(2503) in 23S rRNA + 2 reduced [2Fe-2S]-[ferredoxin] + 2 S-adenosyl-L-methionine = 2-methyladenosine(2503) in 23S rRNA + 5'-deoxyadenosine + L-methionine + 2 oxidized [2Fe-2S]-[ferredoxin] + S-adenosyl-L-homocysteine. The catalysed reaction is adenosine(37) in tRNA + 2 reduced [2Fe-2S]-[ferredoxin] + 2 S-adenosyl-L-methionine = 2-methyladenosine(37) in tRNA + 5'-deoxyadenosine + L-methionine + 2 oxidized [2Fe-2S]-[ferredoxin] + S-adenosyl-L-homocysteine. Specifically methylates position 2 of adenine 2503 in 23S rRNA and position 2 of adenine 37 in tRNAs. This Bifidobacterium adolescentis (strain ATCC 15703 / DSM 20083 / NCTC 11814 / E194a) protein is Probable dual-specificity RNA methyltransferase RlmN.